The following is an 81-amino-acid chain: Apolipoprotein C-I, acidic form (81 aa).

The N-terminal stretch at Met-1–Gly-24 is a signal peptide.

This sequence belongs to the apolipoprotein C1 family.

It localises to the secreted. This Macaca fascicularis (Crab-eating macaque) protein is Apolipoprotein C-I, acidic form (APOC1A).